The following is a 363-amino-acid chain: Aminomethyltransferase (363 aa).

This sequence belongs to the GcvT family. As to quaternary structure, the glycine cleavage system is composed of four proteins: P, T, L and H.

It carries out the reaction N(6)-[(R)-S(8)-aminomethyldihydrolipoyl]-L-lysyl-[protein] + (6S)-5,6,7,8-tetrahydrofolate = N(6)-[(R)-dihydrolipoyl]-L-lysyl-[protein] + (6R)-5,10-methylene-5,6,7,8-tetrahydrofolate + NH4(+). Functionally, the glycine cleavage system catalyzes the degradation of glycine. This is Aminomethyltransferase from Staphylococcus saprophyticus subsp. saprophyticus (strain ATCC 15305 / DSM 20229 / NCIMB 8711 / NCTC 7292 / S-41).